The chain runs to 282 residues: uncharacterized protein (282 aa).

The chain crosses the membrane as a helical span at residues 22–42 (YLFTLGSFVTMFFVLCISPVF).

It is found in the cell membrane. This is an uncharacterized protein from Bacillus anthracis.